Here is a 420-residue protein sequence, read N- to C-terminus: Glucose-1-phosphate adenylyltransferase (420 aa).

Residues Tyr-107, Gly-172, 187–188 (EK), and Ser-205 contribute to the alpha-D-glucose 1-phosphate site.

Belongs to the bacterial/plant glucose-1-phosphate adenylyltransferase family. In terms of assembly, homotetramer.

It carries out the reaction alpha-D-glucose 1-phosphate + ATP + H(+) = ADP-alpha-D-glucose + diphosphate. It functions in the pathway glycan biosynthesis; glycogen biosynthesis. Involved in the biosynthesis of ADP-glucose, a building block required for the elongation reactions to produce glycogen. Catalyzes the reaction between ATP and alpha-D-glucose 1-phosphate (G1P) to produce pyrophosphate and ADP-Glc. This chain is Glucose-1-phosphate adenylyltransferase, found in Rhizobium meliloti (strain 1021) (Ensifer meliloti).